The primary structure comprises 571 residues: La-related protein 7 (571 aa).

M1 carries the post-translational modification N-acetylmethionine. Over residues 1–17 the composition is skewed to basic and acidic residues; sequence METENQKTMEESTEKRK. 2 disordered regions span residues 1 to 25 and 181 to 366; these read METE…KRSR and LNNP…ERHK. Residues 23–117 enclose the HTH La-type RNA-binding domain; it reads RSRVKQVLAD…KPLGERPKDE (95 aa). The RRM domain occupies 120–198; it reads RTVYVELLPK…PRKPGIFPKT (79 aa). Residues 214–223 are compositionally biased toward basic residues; sequence KKKKKKKGRI. Residue K232 forms a Glycyl lysine isopeptide (Lys-Gly) (interchain with G-Cter in SUMO2) linkage. Residue T252 is modified to Phosphothreonine. Residues S254 and S257 each carry the phosphoserine modification. T261 is subject to Phosphothreonine. Residues 287 to 296 show a composition bias toward basic and acidic residues; the sequence is KAGKRERSSA. S294, S295, and S335 each carry phosphoserine. T336 carries the phosphothreonine modification. Over residues 342–351 the composition is skewed to basic and acidic residues; it reads PGDRKGDSLS. Residue S349 is modified to Phosphoserine. Over residues 352–365 the composition is skewed to basic residues; the sequence is KGKRKHKKKHKERH. K408 is covalently cross-linked (Glycyl lysine isopeptide (Lys-Gly) (interchain with G-Cter in SUMO2)). Residues 411–432 form a disordered region; that stretch reads SEMETESKAPPGSGQQCSTQEK. Polar residues predominate over residues 423–432; it reads SGQQCSTQEK. The 114-residue stretch at 439–552 folds into the xRRM domain; the sequence is QFVTGVIVKI…TEKLITKAEK (114 aa).

It belongs to the LARP7 family. Core component of the 7SK RNP complex, at least composed of 7SK RNA, LARP7, MEPCE, HEXIM1 (or HEXIM2) and P-TEFb (composed of CDK9 and CCNT1/cyclin-T1). Interacts with METTL16. Interacts with RBM7; upon genotoxic stress this interaction is enhanced, triggering the release of inactive P-TEFb complex from the core, yielding to P-TEFb complex activation. Associates with box C/D small nucleolar ribonucleoprotein (snoRNP) complexes.

The protein localises to the nucleus. It localises to the nucleoplasm. RNA-binding protein that specifically binds distinct small nuclear RNA (snRNAs) and regulates their processing and function. Specifically binds the 7SK snRNA (7SK RNA) and acts as a core component of the 7SK ribonucleoprotein (RNP) complex, thereby acting as a negative regulator of transcription elongation by RNA polymerase II. The 7SK RNP complex sequesters the positive transcription elongation factor b (P-TEFb) in a large inactive 7SK RNP complex preventing RNA polymerase II phosphorylation and subsequent transcriptional elongation. The 7SK RNP complex also promotes snRNA gene transcription by RNA polymerase II via interaction with the little elongation complex (LEC). LARP7 specifically binds to the highly conserved 3'-terminal U-rich stretch of 7SK RNA; on stimulation, remains associated with 7SK RNA, whereas P-TEFb is released from the complex. LARP7 also acts as a regulator of mRNA splicing fidelity by promoting U6 snRNA processing. Specifically binds U6 snRNAs and associates with a subset of box C/D RNP complexes: promotes U6 snRNA 2'-O-methylation by facilitating U6 snRNA loading into box C/D RNP complexes. U6 snRNA 2'-O-methylation is required for mRNA splicing fidelity. Binds U6 snRNAs with a 5'-CAGGG-3' sequence motif. U6 snRNA processing is required for spermatogenesis. This is La-related protein 7 from Rattus norvegicus (Rat).